We begin with the raw amino-acid sequence, 600 residues long: MRIKKKGTSGNAKNFITRTQAVKKLQVSLADFRRLCIFKGIYPREPRNKKKANKGSTAPVTFYYTKDIQYLLHEPVLGKFREHKTFAKKLQRALGRGEVSDAQKLEGNRPKYTLEHIIKERYPTFLDALRDIDDPLNMLFLFANMPATDKVSHRITKEAEKLTNQWLAYVAKERLIKKVFVSIKGVYYQANVKGQEVRWLVPFKFPTNIPTDVDFRIMLTFLEFYSTLLHFVLFRLYNDANLIYPPTIDTEKLKGIGGLSSYVLQSKDQGVKALLPNAKKAADSKDESKKVKETKLSKEEISKAVAADKSLNENAEDNVSENVEDVELDEFSSTNKTAGDLLSQPSKFASPTSTLLSKFIFYVGREVPLDILEFCILSCGGSIISEIALDELQLNQPEEYKKLDLSNITHQIVDRPTVASKVAGRTYVQPQWVFDCLNKSELLPVSQYAPGETLPPHLSPWGDAGGYNPDAEVKPTEQGEEEEEEEEEIEGDEIEEDVEEEDEEEDEDLQAQKELELEAAGVKSADAQKKDKKSSKGKKRSAEDEEKDLKKIMMSNKQRKLYKKMQYGIDKKEARQDDLTKKRRKLEKTKAELGKLNKKN.

The region spanning 351–450 (PTSTLLSKFI…ELLPVSQYAP (100 aa)) is the BRCT domain. A disordered region spans residues 454-600 (LPPHLSPWGD…AELGKLNKKN (147 aa)). Positions 478–509 (QGEEEEEEEEEIEGDEIEEDVEEEDEEEDEDL) are enriched in acidic residues. The stretch at 478–600 (QGEEEEEEEE…AELGKLNKKN (123 aa)) forms a coiled coil. Positions 530 to 539 (KDKKSSKGKK) are enriched in basic residues. Composition is skewed to basic and acidic residues over residues 569–580 (IDKKEARQDDLT) and 588–600 (KTKAELGKLNKKN).

The protein belongs to the pescadillo family. In terms of assembly, component of the NOP7 complex, composed of ERB1, NOP7 and YTM1. The complex is held together by ERB1, which interacts with NOP7 via its N-terminal domain and with YTM1 via a high-affinity interaction between the seven-bladed beta-propeller domains of the 2 proteins. The NOP7 complex associates with the 66S pre-ribosome.

It is found in the nucleus. The protein localises to the nucleolus. Its subcellular location is the nucleoplasm. Component of the NOP7 complex, which is required for maturation of the 25S and 5.8S ribosomal RNAs and formation of the 60S ribosome. The protein is Pescadillo homolog of Debaryomyces hansenii (strain ATCC 36239 / CBS 767 / BCRC 21394 / JCM 1990 / NBRC 0083 / IGC 2968) (Yeast).